Here is a 436-residue protein sequence, read N- to C-terminus: GTPase Der (436 aa).

2 consecutive EngA-type G domains span residues 4 to 167 and 175 to 351; these read PTIA…PNEY and IKFS…ESQN. Residues 10-17, 57-61, 119-122, 181-188, 229-233, and 294-297 each bind GTP; these read GRPNVGKS, DTGGI, NKVD, DTAGM, and NKWD. Residues 352–436 form the KH-like domain; that stretch reads TRIPSAVLND…PIHLIARKRK (85 aa).

It belongs to the TRAFAC class TrmE-Era-EngA-EngB-Septin-like GTPase superfamily. EngA (Der) GTPase family. As to quaternary structure, associates with the 50S ribosomal subunit.

Functionally, GTPase that plays an essential role in the late steps of ribosome biogenesis. This Streptococcus pneumoniae (strain JJA) protein is GTPase Der.